The primary structure comprises 312 residues: Tetraacyldisaccharide 4'-kinase (312 aa).

Residue 60-67 coordinates ATP; that stretch reads IAGGSGKT.

This sequence belongs to the LpxK family.

The catalysed reaction is a lipid A disaccharide + ATP = a lipid IVA + ADP + H(+). Its pathway is glycolipid biosynthesis; lipid IV(A) biosynthesis; lipid IV(A) from (3R)-3-hydroxytetradecanoyl-[acyl-carrier-protein] and UDP-N-acetyl-alpha-D-glucosamine: step 6/6. Functionally, transfers the gamma-phosphate of ATP to the 4'-position of a tetraacyldisaccharide 1-phosphate intermediate (termed DS-1-P) to form tetraacyldisaccharide 1,4'-bis-phosphate (lipid IVA). This chain is Tetraacyldisaccharide 4'-kinase, found in Helicobacter pylori (strain HPAG1).